The primary structure comprises 388 residues: Granulocyte-macrophage colony-stimulating factor receptor subunit alpha (388 aa).

A signal peptide spans 1 to 29 (MTSSHAMNITPLAQLALLFSTLLLPGTQA). Topologically, residues 30 to 327 (LLAPTTPDAG…PLEAEDTRVP (298 aa)) are extracellular. Asn43, Asn63, Asn106, Asn132, Asn165, and Asn237 each carry an N-linked (GlcNAc...) asparagine glycan. The region spanning 228–324 (PPRDVTASCN…PAHPLEAEDT (97 aa)) is the Fibronectin type-III domain. Positions 310–314 (WGEWS) match the WSXWS motif motif. The helical transmembrane segment at 328–348 (GALLYAVTACAVLLCALALGV) threads the bilayer. The Cytoplasmic segment spans residues 349-388 (TCRRFEVTRRLFPPIPGIRDKVSDDVRVNPETLRKDLLQP). A Box 1 motif motif is present at residues 359–367 (LFPPIPGIR).

It belongs to the type I cytokine receptor family. Type 5 subfamily. In terms of assembly, heterodimer of an alpha and a beta subunit. The beta subunit is common to the IL3, IL5 and GM-CSF receptors. The signaling GM-CSF receptor complex is a dodecamer of two head-to-head hexamers of two alpha, two beta, and two ligand subunits.

Its subcellular location is the membrane. Low affinity receptor for granulocyte-macrophage colony-stimulating factor. Transduces a signal that results in the proliferation, differentiation, and functional activation of hematopoietic cells. The protein is Granulocyte-macrophage colony-stimulating factor receptor subunit alpha (Csf2ra) of Mus musculus (Mouse).